A 282-amino-acid polypeptide reads, in one-letter code: Elongation factor Ts (282 aa).

The involved in Mg(2+) ion dislocation from EF-Tu stretch occupies residues 79–82 (TDFV).

The protein belongs to the EF-Ts family.

The protein localises to the cytoplasm. In terms of biological role, associates with the EF-Tu.GDP complex and induces the exchange of GDP to GTP. It remains bound to the aminoacyl-tRNA.EF-Tu.GTP complex up to the GTP hydrolysis stage on the ribosome. In Shewanella sediminis (strain HAW-EB3), this protein is Elongation factor Ts.